An 82-amino-acid chain; its full sequence is Large ribosomal subunit protein bL31B (82 aa).

Belongs to the bacterial ribosomal protein bL31 family. Type B subfamily. In terms of assembly, part of the 50S ribosomal subunit.

This is Large ribosomal subunit protein bL31B from Acinetobacter baylyi (strain ATCC 33305 / BD413 / ADP1).